A 588-amino-acid polypeptide reads, in one-letter code: Myc box-dependent-interacting protein 1 (588 aa).

Ala2 bears the N-acetylalanine mark. Residues 2 to 122 (AEMGSKGVTA…DYHQKLVDQA (121 aa)) form an interaction with BIN2 region. 2 coiled-coil regions span residues 15-42 (ASNVQKKLTRAQEKVLQKLGKADETKDE) and 193-274 (HLVA…EKQH). Residues 29-276 (VLQKLGKADE…LVSLEKQHGS (248 aa)) form the BAR domain. Positions 279-355 (FTVKAQPSDS…PKHTPSKEMK (77 aa)) are disordered. Ser296, Ser298, and Ser304 each carry phosphoserine. A Phosphothreonine modification is found at Thr308. A phosphoserine mark is found at Ser324 and Ser332. Positions 379–422 (FEAPGPFSEQASLLDLDFEPLPPVASPVKAPTPSGQSIPWDLWE) are clathrin-binding. Residues 448–483 (PSQTAEPGPAQPAEASEVVGGTQEPGETAASEATSS) are disordered. Residues 474-483 (ETAASEATSS) are compositionally biased toward low complexity. Positions 515–588 (GFMFKVQAQH…FPENFTERVQ (74 aa)) constitute an SH3 domain.

As to quaternary structure, heterodimer with AMPH. Binds SH3GLB1. Interacts (via SH3 domain) with DNM1. Interacts with SYNJ1. Interacts (via SH3 domain) with DNM2. Interacts with CLTC. Interacts with AP2A2. Interacts with AP2B1. Interacts with MYC (via N-terminal transactivation domain); the interaction requires the integrity of the conserved MYC box regions 1 and 2. Interacts with BIN2. Interacts with SNX4. Interacts (via BAR domain) with BACE1. Binds (via BAR domain) F-actin. In terms of processing, phosphorylated by protein kinase C. In terms of tissue distribution, highly expressed in the brain and muscle. Isoform AMPH2-1 is expressed only in the brain where it is concentrated in axon initial segments and nodes of Ranvier. Isoform AMPH2-2 is widely expressed.

It is found in the nucleus. It localises to the cytoplasm. The protein localises to the endosome. Its subcellular location is the cell membrane. The protein resides in the sarcolemma. It is found in the T-tubule. Is a key player in the control of plasma membrane curvature, and membrane shaping and remodeling. Required in muscle cells for the formation of T-tubules, tubular invaginations of the plasma membrane that function in depolarization-contraction coupling. Required in muscle cells for the formation of T-tubules, tubular invaginations of the plasma membrane that function in depolarization-contraction coupling. Is a negative regulator of endocytosis. Is also involved in the regulation of intracellular vesicles sorting, modulation of BACE1 trafficking and the control of amyloid-beta production. In neuronal circuits, endocytosis regulation may influence the internalization of PHF-tau aggregates. May be involved in the regulation of MYC activity and the control cell proliferation. In Rattus norvegicus (Rat), this protein is Myc box-dependent-interacting protein 1 (Bin1).